Here is a 467-residue protein sequence, read N- to C-terminus: UDP-glycosyltransferase 71D1 (467 aa).

The Proton acceptor role is filled by histidine 16. Histidine 16 provides a ligand contact to an anthocyanidin. Aspartate 122 functions as the Charge relay in the catalytic mechanism. 7 residues coordinate UDP-alpha-D-glucose: threonine 144, glutamine 341, histidine 356, tryptophan 359, asparagine 360, serine 361, and glutamate 364. Position 379 (alanine 379) interacts with an anthocyanidin. 2 residues coordinate UDP-alpha-D-glucose: glutamate 380 and glutamine 381.

Belongs to the UDP-glycosyltransferase family.

The enzyme catalyses a flavonol + UDP-alpha-D-glucose = a flavonol 3-O-beta-D-glucoside + UDP + H(+). Possesses quercetin 3-O-glucosyltransferase activity in vitro. The protein is UDP-glycosyltransferase 71D1 (UGT71D1) of Arabidopsis thaliana (Mouse-ear cress).